Here is a 90-residue protein sequence, read N- to C-terminus: UPF0386 protein Rru_A2144 (90 aa).

It belongs to the UPF0386 family.

The sequence is that of UPF0386 protein Rru_A2144 from Rhodospirillum rubrum (strain ATCC 11170 / ATH 1.1.1 / DSM 467 / LMG 4362 / NCIMB 8255 / S1).